The primary structure comprises 195 residues: CASP-like protein 1B1 (195 aa).

At 1–15 (MAKLALAATSGKSCK) the chain is on the cytoplasmic side. The chain crosses the membrane as a helical span at residues 16–36 (ILLGLRLLAFSATLSAAIVMG). At 37-67 (LNKETETFVVGKVGNTPIKATFTAKFDHTPA) the chain is on the extracellular side. The helical transmembrane segment at 68-88 (FVFFVVANAMVSFHNLLMIAL) threads the bilayer. At 89-104 (QIFGGKMEFTGFRLLS) the chain is on the cytoplasmic side. Residues 105–125 (VAILDMLNVTLISAAANAAAF) traverse the membrane as a helical segment. The Extracellular portion of the chain corresponds to 126–154 (MAEVGKNGNKHARWDKICDRFATYCDHGA). The helical transmembrane segment at 155–175 (GALIAAFAGVILMLIISAASI) threads the bilayer. Residues 176–195 (SRLAQQNKCCSTTASPSVVP) lie on the Cytoplasmic side of the membrane.

It belongs to the Casparian strip membrane proteins (CASP) family. As to quaternary structure, homodimer and heterodimers.

The protein resides in the cell membrane. In Arabidopsis lyrata subsp. lyrata (Lyre-leaved rock-cress), this protein is CASP-like protein 1B1.